We begin with the raw amino-acid sequence, 619 residues long: Chaperone protein HscA homolog (619 aa).

Belongs to the heat shock protein 70 family.

Chaperone involved in the maturation of iron-sulfur cluster-containing proteins. Has a low intrinsic ATPase activity which is markedly stimulated by HscB. The chain is Chaperone protein HscA homolog from Methylococcus capsulatus (strain ATCC 33009 / NCIMB 11132 / Bath).